The sequence spans 37 residues: Large ribosomal subunit protein bL36c (37 aa).

Belongs to the bacterial ribosomal protein bL36 family.

It is found in the plastid. This chain is Large ribosomal subunit protein bL36c, found in Helicosporidium sp. subsp. Simulium jonesii (Green alga).